The primary structure comprises 598 residues: Peptidoglycan D,D-transpeptidase FtsI homolog (598 aa).

The helical transmembrane segment at Ile12–Leu33 threads the bilayer. Ser291 acts as the Acyl-ester intermediate in catalysis.

It belongs to the transpeptidase family.

The protein resides in the plastid. Its subcellular location is the chloroplast membrane. It carries out the reaction Preferential cleavage: (Ac)2-L-Lys-D-Ala-|-D-Ala. Also transpeptidation of peptidyl-alanyl moieties that are N-acyl substituents of D-alanine.. This chain is Peptidoglycan D,D-transpeptidase FtsI homolog (ftsI), found in Mesostigma viride (Green alga).